The sequence spans 209 residues: GTP-binding nuclear protein Ran1A (209 aa).

In terms of domain architecture, Small GTPase Ran-type spans 1–162 (NFKLVIVGDG…LYLARKLAGD (162 aa)). Position 9 to 16 (9 to 16 (DGGTGKTT)) interacts with GTP. The segment at 28 to 36 (KKYEPTIGV) is switch-I. GTP-binding positions include glycine 59, 113 to 116 (NKVD), and 141 to 143 (SAK). The segment at 59–75 (GQEKFGGLRDGYYIHGQ) is switch-II. Residues 187–196 (QHEAELAQAA) are compositionally biased toward low complexity. The disordered stretch occupies residues 187-209 (QHEAELAQAASQPLPDDDDDAFD).

This sequence belongs to the small GTPase superfamily. Ran family. Found in a nuclear export complex with RanGTP, exportin and pre-miRNA.

Its subcellular location is the nucleus. GTP-binding protein involved in nucleocytoplasmic transport. Required for the import of protein into the nucleus and also for RNA export. Involved in chromatin condensation and control of cell cycle. The polypeptide is GTP-binding nuclear protein Ran1A (RAN1A) (Lotus japonicus (Lotus corniculatus var. japonicus)).